Here is a 362-residue protein sequence, read N- to C-terminus: UDP-N-acetylglucosamine--N-acetylmuramyl-(pentapeptide) pyrophosphoryl-undecaprenol N-acetylglucosamine transferase (362 aa).

UDP-N-acetyl-alpha-D-glucosamine is bound by residues 21–23, asparagine 129, arginine 170, serine 198, and glutamine 290; that span reads TGG.

This sequence belongs to the glycosyltransferase 28 family. MurG subfamily.

It localises to the cell inner membrane. The catalysed reaction is di-trans,octa-cis-undecaprenyl diphospho-N-acetyl-alpha-D-muramoyl-L-alanyl-D-glutamyl-meso-2,6-diaminopimeloyl-D-alanyl-D-alanine + UDP-N-acetyl-alpha-D-glucosamine = di-trans,octa-cis-undecaprenyl diphospho-[N-acetyl-alpha-D-glucosaminyl-(1-&gt;4)]-N-acetyl-alpha-D-muramoyl-L-alanyl-D-glutamyl-meso-2,6-diaminopimeloyl-D-alanyl-D-alanine + UDP + H(+). It participates in cell wall biogenesis; peptidoglycan biosynthesis. In terms of biological role, cell wall formation. Catalyzes the transfer of a GlcNAc subunit on undecaprenyl-pyrophosphoryl-MurNAc-pentapeptide (lipid intermediate I) to form undecaprenyl-pyrophosphoryl-MurNAc-(pentapeptide)GlcNAc (lipid intermediate II). This Synechococcus sp. (strain JA-3-3Ab) (Cyanobacteria bacterium Yellowstone A-Prime) protein is UDP-N-acetylglucosamine--N-acetylmuramyl-(pentapeptide) pyrophosphoryl-undecaprenol N-acetylglucosamine transferase.